Consider the following 214-residue polypeptide: Pyrrolidone-carboxylate peptidase (214 aa).

Active-site residues include Glu-80, Cys-143, and His-166.

The protein belongs to the peptidase C15 family. Homotetramer.

Its subcellular location is the cytoplasm. The catalysed reaction is Release of an N-terminal pyroglutamyl group from a polypeptide, the second amino acid generally not being Pro.. Its function is as follows. Removes 5-oxoproline from various penultimate amino acid residues except L-proline. This Klebsiella pneumoniae (strain 342) protein is Pyrrolidone-carboxylate peptidase.